A 340-amino-acid chain; its full sequence is Arginine N-succinyltransferase subunit beta (340 aa).

It belongs to the succinylarginine dihydrolase family. Heterotetramer of two alpha and two beta subunits.

It catalyses the reaction succinyl-CoA + L-arginine = N(2)-succinyl-L-arginine + CoA + H(+). The protein operates within amino-acid degradation; L-arginine degradation via AST pathway; L-glutamate and succinate from L-arginine: step 1/5. This is Arginine N-succinyltransferase subunit beta (aruG) from Pseudomonas aeruginosa (strain ATCC 15692 / DSM 22644 / CIP 104116 / JCM 14847 / LMG 12228 / 1C / PRS 101 / PAO1).